The sequence spans 138 residues: Protein FAM136A (138 aa).

N-acetylalanine is present on A2. Phosphothreonine is present on residues T124 and T126.

This sequence belongs to the FAM136 family.

This chain is Protein FAM136A (Fam136a), found in Rattus norvegicus (Rat).